The primary structure comprises 199 residues: MARCKS-related protein (199 aa).

The disordered stretch occupies residues Met1 to Glu199. The N-myristoyl glycine moiety is linked to residue Gly2. Thr14 bears the Phosphothreonine mark. The span at Glu16–Ala26 shows a compositional bias: low complexity. 3 positions are modified to phosphoserine: Ser22, Ser36, and Ser48. Positions Gly53–Ala64 are enriched in low complexity. A Phosphoserine modification is found at Ser71. Basic and acidic residues predominate over residues Ala76–Thr85. A Phosphothreonine modification is found at Thr85. Residues Pro86–Phe98 are compositionally biased toward basic residues. The segment at Lys87–Lys110 is effector domain involved in lipid-binding and calmodulin-binding. A phosphoserine; by PKC mark is found at Ser93, Ser101, and Ser104. A Phosphoserine modification is found at Ser119. The residue at position 120 (Ser120) is a Phosphoserine; by MAPK8. Ser135 carries the phosphoserine modification. Phosphothreonine; by MAPK8 is present on Thr148. Residue Ser151 is modified to Phosphoserine. A compositionally biased stretch (low complexity) spans Ala156–Gly167. Phosphothreonine is present on Thr170. The span at Ser181–Glu199 shows a compositional bias: low complexity. A Phosphothreonine; by MAPK8 modification is found at Thr182. Thr191 carries the phosphothreonine modification.

The protein belongs to the MARCKS family. In terms of assembly, binds to filamentous actin (F-actin), but not to monomeric G-actin, independently of its phosphorylation status. Interacts with calmodulin. In terms of processing, phosphorylated. Phosphorylation at Ser-120 and Thr-182 is non-redundantly catalyzed by MAPK8 in vivo. Phosphorylation at Thr-148 is preferentially catalyzed by MAPK8 in vivo, but this modification can also be catalyzed by other kinases in the absence of MAPK8. May be phosphorylated by protein kinase C, which disrupts the interaction with calmodulin.

The protein resides in the cytoplasm. Its subcellular location is the cytoskeleton. It localises to the cell membrane. Its function is as follows. Controls cell movement by regulating actin cytoskeleton homeostasis and filopodium and lamellipodium formation. When unphosphorylated, induces cell migration. When phosphorylated by MAPK8, induces actin bundles formation and stabilization, thereby reducing actin plasticity, hence restricting cell movement, including neuronal migration. May be involved in coupling the protein kinase C and calmodulin signal transduction systems. The chain is MARCKS-related protein (MARCKSL1) from Oryctolagus cuniculus (Rabbit).